A 126-amino-acid polypeptide reads, in one-letter code: Small ribosomal subunit protein bS6 (126 aa).

This sequence belongs to the bacterial ribosomal protein bS6 family.

Functionally, binds together with bS18 to 16S ribosomal RNA. The protein is Small ribosomal subunit protein bS6 of Bordetella bronchiseptica (strain ATCC BAA-588 / NCTC 13252 / RB50) (Alcaligenes bronchisepticus).